Here is a 179-residue protein sequence, read N- to C-terminus: Large ribosomal subunit protein uL5 (179 aa).

It belongs to the universal ribosomal protein uL5 family. Part of the 50S ribosomal subunit; part of the 5S rRNA/L5/L18/L25 subcomplex. Contacts the 5S rRNA and the P site tRNA. Forms a bridge to the 30S subunit in the 70S ribosome.

This is one of the proteins that bind and probably mediate the attachment of the 5S RNA into the large ribosomal subunit, where it forms part of the central protuberance. In the 70S ribosome it contacts protein S13 of the 30S subunit (bridge B1b), connecting the 2 subunits; this bridge is implicated in subunit movement. Contacts the P site tRNA; the 5S rRNA and some of its associated proteins might help stabilize positioning of ribosome-bound tRNAs. The protein is Large ribosomal subunit protein uL5 of Delftia acidovorans (strain DSM 14801 / SPH-1).